The primary structure comprises 154 residues: D-aminoacyl-tRNA deacylase (154 aa).

The Gly-cisPro motif, important for rejection of L-amino acids motif lies at 142 to 143 (GP).

Belongs to the DTD family. As to quaternary structure, homodimer.

It localises to the cytoplasm. It catalyses the reaction glycyl-tRNA(Ala) + H2O = tRNA(Ala) + glycine + H(+). The enzyme catalyses a D-aminoacyl-tRNA + H2O = a tRNA + a D-alpha-amino acid + H(+). An aminoacyl-tRNA editing enzyme that deacylates mischarged D-aminoacyl-tRNAs. Also deacylates mischarged glycyl-tRNA(Ala), protecting cells against glycine mischarging by AlaRS. Acts via tRNA-based rather than protein-based catalysis; rejects L-amino acids rather than detecting D-amino acids in the active site. By recycling D-aminoacyl-tRNA to D-amino acids and free tRNA molecules, this enzyme counteracts the toxicity associated with the formation of D-aminoacyl-tRNA entities in vivo and helps enforce protein L-homochirality. This Polaromonas sp. (strain JS666 / ATCC BAA-500) protein is D-aminoacyl-tRNA deacylase.